A 738-amino-acid chain; its full sequence is MDLGDVVEMPMKVTEWQKTYTYDSGINSGINTSVPSLNGKMVIEDDSLAYPNSYTTVKTTTYTQQQNPDMESHLNMTRAQRVRAAMYPETVEDHSYLFSTQIEGQQTNVQKLAEPSQMLKSAIMHLINYQDDAELATRAIPELTKLLNDEDPMVVNKASMIVNQLSKKEASRKALMQSPQIVAAIVRTMQHTSDMDTARCTTSILHNLSHHREGLLSIFKSGGIPALVRMLSSPVESVLFYAITTLHNLLLYQEGAKMAVRLADGLQKMVPLLNKNNPKFLAITTDCLQLLAYGNQESKLIILGNGGPQGLVQIMRNYNYEKLLWTTSRVLKVLSVCPSNKPAIVEAGGMQALGKHLTSNSPRLVQNCLWTLRNLSDVATKQEGLDNVLKILVNQLSSDDVNVLTCATGTLSNLTCNNGRNKTLVTQSNGVESLIHTILRASDKDDIAEPAVCAMRHLTSRHQDAEVAQNSVRLHYGIPAIVKLLNPPYQWPLVKATIGLIRNLALCPANHAPLYDAGVIPRLVQLLVKSHQDAQRHAASGTQQPYTDGVKMEEIVEGCTGALHILARDPVNRMDIYKLNTIPLFVQLLYSPVENIQRVSSGVLCELAQDKEAADTIDAEGASAPLMELLHSRNEGIATYAAAVLFRISEDKNADYRKRVSVELTNAIFRQDPAAWEAAQSMIPLNDPYSDEMENYRAMYPEDIPLEPMGGDMDVEYAMDGYSDHPGRGHYADNHMMA.

ARM repeat units lie at residues 128 to 167 (NYQD…QLSK), 168 to 211 (KEAS…LSHH), 212 to 251 (REGL…NLLL), 254 to 293 (EGAK…LLAY), 294 to 337 (GNQE…LSVC), 338 to 377 (PSNK…NLSD), 379 to 416 (ATKQ…NLTC), 419 to 460 (GRNK…HLTS), 466 to 506 (EVAQ…NLAL), 508 to 547 (PANH…QPYT), 570 to 609 (PVNR…ELAQ), and 611 to 657 (KEAA…ADYR).

This sequence belongs to the beta-catenin family. As to quaternary structure, homodimer.

Its subcellular location is the cell junction. It is found in the adherens junction. The protein resides in the desmosome. The protein localises to the cytoplasm. It localises to the cytoskeleton. Its subcellular location is the membrane. Its function is as follows. Common junctional plaque protein. The membrane-associated plaques are architectural elements in an important strategic position to influence the arrangement and function of both the cytoskeleton and the cells within the tissue. The presence of plakoglobin in both the desmosomes and in the intermediate junctions suggests that it plays a central role in the structure and function of submembranous plaques. This is Junction plakoglobin (jup) from Xenopus laevis (African clawed frog).